We begin with the raw amino-acid sequence, 91 residues long: MAKQATMKNAALKQLTKDADEILHLIKVQLDNLTLPSCPLYEEVLDTQMFGLQKEVDFAVKLGLVDREDGKQIMLRLEKELSKLHEAFTLV.

It belongs to the UPF0358 family.

The polypeptide is UPF0358 protein SAS1047 (Staphylococcus aureus (strain MSSA476)).